The chain runs to 302 residues: Lysosomal thioesterase PPT2 (302 aa).

Residues 1–27 (MPGLWRQRLPSAWALLLLPFLPLLMPA) form the signal peptide. Asn60 carries an N-linked (GlcNAc...) asparagine glycan. 2 disulfides stabilise this stretch: Cys109/Cys117 and Cys165/Cys176. The active-site Nucleophile is Ser111. N-linked (GlcNAc...) asparagine glycosylation is found at Asn190 and Asn206. Asp228 is an active-site residue. N-linked (GlcNAc...) asparagine glycosylation is present at Asn245. A disulfide bridge links Cys276 with Cys296. His283 is an active-site residue. Asn289 carries an N-linked (GlcNAc...) asparagine glycan.

It belongs to the palmitoyl-protein thioesterase family. Expressed throughout the brain, primarily in neurons, and at lower levels in glial cells.

It is found in the lysosome. It carries out the reaction hexadecanoyl-CoA + H2O = hexadecanoate + CoA + H(+). The enzyme catalyses S-hexadecanoyl-N-acetylcysteamine + H2O = N-acetylcysteamine + hexadecanoate + H(+). Its function is as follows. Catalyzes the cleavage of thioester bonds from S-palmitoyl-CoA or S-palmitoyl-N-acetylcysteamine (unbranched structures) but does not have activity against palmitoylcysteine or palmitoylated proteins, branched structures or bulky head groups. Conversely, hydrolyzes both long and short chain fatty acyl-CoA substrate. This chain is Lysosomal thioesterase PPT2 (Ppt2), found in Mus musculus (Mouse).